Consider the following 179-residue polypeptide: UPF0227 protein VS_2073 (179 aa).

The protein belongs to the UPF0227 family.

The chain is UPF0227 protein VS_2073 from Vibrio atlanticus (strain LGP32) (Vibrio splendidus (strain Mel32)).